Consider the following 263-residue polypeptide: Killer cell lectin-like receptor 4 (263 aa).

Residues methionine 1–glutamine 44 lie on the Cytoplasmic side of the membrane. A helical; Signal-anchor for type II membrane protein membrane pass occupies residues leucine 45 to methionine 65. The Extracellular portion of the chain corresponds to threonine 66–histidine 263. N-linked (GlcNAc...) asparagine glycosylation is found at asparagine 87 and asparagine 104. The 120-residue stretch at glycine 139–leucine 258 folds into the C-type lectin domain. 4 cysteine pairs are disulfide-bonded: cysteine 146-cysteine 151, cysteine 164-cysteine 252, cysteine 168-cysteine 254, and cysteine 233-cysteine 246. N-linked (GlcNAc...) asparagine glycosylation is found at asparagine 170 and asparagine 222.

As to quaternary structure, homodimer; disulfide-linked. Interacts with the adapter protein TYROBP/DAP12; the interaction leads to natural killer cell activation.

It localises to the cell membrane. Its function is as follows. Receptor on natural killer (NK) cells for class I MHC. This chain is Killer cell lectin-like receptor 4 (Klra4), found in Mus musculus (Mouse).